Here is a 466-residue protein sequence, read N- to C-terminus: Protein hob1 (466 aa).

The BAR domain maps to 17–269; sequence LRSKFNVGEI…RGDVKDRAEA (253 aa). 2 coiled-coil regions span residues 31–67 and 177–204; these read IYED…LNHQ and EKKL…LKEE. The interval 280–342 is disordered; that stretch reads PTYKRPGMGP…ASDYSTPSAG (63 aa). A compositionally biased stretch (low complexity) spans 294 to 303; the sequence is ATASSSSSFS. Phosphoserine is present on residues S298, S299, S301, and S303. The SH3 domain maps to 407–466; the sequence is PAAEHVVALYDYAAQAAGDLSFHAGDRIEVVSRTDNQNEWWIGRLNGAQGQFPGNYVQLE.

Its function is as follows. Has a role in DNA damage signaling as a part of stress response processes. The polypeptide is Protein hob1 (hob1) (Schizosaccharomyces pombe (strain 972 / ATCC 24843) (Fission yeast)).